The chain runs to 270 residues: Expansin-B10 (270 aa).

The N-terminal stretch at 1 to 31 (MAVNVRTMWSSMRAQVAMVVALVFLVRGAWC) is a signal peptide. Residue N41 is glycosylated (N-linked (GlcNAc...) asparagine). Residues 70-176 (GGGCGYKDVN…RRVKCKYDSK (107 aa)) form the Expansin-like EG45 domain. 3 disulfides stabilise this stretch: C73-C101, C104-C171, and C109-C115. An Expansin-like CBD domain is found at 188 to 269 (NYLALLVKYV…NWKANTAYTA (82 aa)).

It belongs to the expansin family. Expansin B subfamily. In terms of tissue distribution, expressed in pollen.

The protein resides in the secreted. Its subcellular location is the cell wall. It is found in the membrane. Its function is as follows. May aid fertilization by loosening the cell wall of the stigma and style, thereby facilitating penetration of the pollen tube. Acts selectively on grass cell walls, which are relatively poor in pectins and xyloglucans and rich in glucuronoarabinoxylans and (1-3),(1-4)-beta-D-glucans, when compared with cell walls of other angiosperms, including other monocots. This chain is Expansin-B10 (EXPB10), found in Zea mays (Maize).